Consider the following 118-residue polypeptide: Large ribosomal subunit protein bL20 (118 aa).

This sequence belongs to the bacterial ribosomal protein bL20 family.

Functionally, binds directly to 23S ribosomal RNA and is necessary for the in vitro assembly process of the 50S ribosomal subunit. It is not involved in the protein synthesizing functions of that subunit. In Francisella philomiragia subsp. philomiragia (strain ATCC 25017 / CCUG 19701 / FSC 153 / O#319-036), this protein is Large ribosomal subunit protein bL20.